The following is a 169-amino-acid chain: Cell division inhibitor SulA (169 aa).

Positions 106–112 are ftsZ binding; it reads ALRTGNY. Residues 162 to 169 form a lon protease binding region; it reads KIHSNLYH.

This sequence belongs to the SulA family. As to quaternary structure, interacts with FtsZ. Post-translationally, is rapidly cleaved and degraded by the Lon protease once DNA damage is repaired.

Functionally, component of the SOS system and an inhibitor of cell division. Accumulation of SulA causes rapid cessation of cell division and the appearance of long, non-septate filaments. In the presence of GTP, binds a polymerization-competent form of FtsZ in a 1:1 ratio, thus inhibiting FtsZ polymerization and therefore preventing it from participating in the assembly of the Z ring. This mechanism prevents the premature segregation of damaged DNA to daughter cells during cell division. In Escherichia coli O81 (strain ED1a), this protein is Cell division inhibitor SulA.